A 297-amino-acid polypeptide reads, in one-letter code: Mitochondrial citrate transporter A (297 aa).

Solcar repeat units lie at residues 12-91 (PSSL…LKSL), 102-188 (PKTV…LKQM), and 199-286 (LGTA…TMDA). The next 6 helical transmembrane spans lie at 18-31 (IIAG…EIAI), 61-81 (SQWY…AGIR), 99-119 (ISGP…SLLA), 160-180 (FFQG…TRFS), 192-212 (YVAP…GIAG), and 251-272 (KDEG…LIMS).

Belongs to the mitochondrial carrier (TC 2.A.29) family.

It is found in the mitochondrion inner membrane. It catalyses the reaction citrate(in) + H(+)(in) = citrate(out) + H(+)(out). Functionally, mitochondrial transporter that mediates citrate export from mitochondria to cytoplasm. Both ctpA, ctpB, and ctpD play important roles in citric acid transport across the mitochondrial membrane and function in a redundant manner. In Aspergillus niger (strain ATCC 1015 / CBS 113.46 / FGSC A1144 / LSHB Ac4 / NCTC 3858a / NRRL 328 / USDA 3528.7), this protein is Mitochondrial citrate transporter A.